Reading from the N-terminus, the 485-residue chain is Outer membrane protein OprM (485 aa).

The first 17 residues, 1 to 17 (MKRSFLSLAVAAVVLSG), serve as a signal peptide directing secretion. Cys-18 carries the N-palmitoyl cysteine lipid modification. Cys-18 is lipidated: S-diacylglycerol cysteine.

The protein belongs to the outer membrane factor (OMF) (TC 1.B.17) family. As to quaternary structure, component of the MexAB-OprM multidrug efflux complex, composed of six MexA subunits forming a hexameric tube, binding to a MexB trimer, which interact with the trimeric OprM outer membrane channel protein. The OprM homotrimer forms a 135 Angstroms-long pore. It consists of a beta-barrel, which is probably inserted in the outer membrane, and an alpha-barrel formed by alpha-helices which probably spans the periplasm. In the ground state the periplasmic end is closed, while the outer membrane end opening is 6-8 Angstroms in diameter. OprM does not directly contact MexB; instead, MexA joins MexB and OprM by forming a funnel-like hexamer anchored to the inner membrane. MexA may initially form a hexameric ring complex with MexB prior to OprM, then OprM undergoes a conformational change as it contacts MexA, allowing the periplasmic gate to open. It is thought that, under high intracellular substrate concentration, MexB ejects substrate into the tunnel formed by MexA-OprM; as the substrate level declines, conformational changes in MexB cause efflux to reduce and stop and the complex shifts to the closed state. MexB subunit acts as a substrate:proton antiporter and activity is enhanced significantly when in complex with MexA and OprM, in vitro.

The protein resides in the cell outer membrane. Its activity is regulated as follows. Export of antibiotics and solvents is dramatically decreased in the presence of the protonophore carbonyl cyanide m-chlorophenylhydrazone (CCCP), therefore may be driven by a proton gradient. Antibiotic efflux is inhibited by pyridopyrimidine derivatives, such as ABI-PP, acting by binding to a hydrophobic pocket in MexB. Its function is as follows. The outer membrane component of the MexAB-OprM efflux system that confers multidrug resistance. Functions as the major efflux pump for n-hexane and p-xylene efflux. Has been shown in one study to be involved in the active efflux of the autoinducer N-(3-oxododecanoyl) homoserine lactone, thereby playing an indirect role in quorum-sensing; but has been shown in another study not to be involved in efflux of this autoinducer. Over-expression of the pump increases antibiotic and solvent efflux capacities. Can replace the OprJ outer membrane component of the MexCD-OprJ pump; the antibiotics exported are those exported by the intact MexCD pump, showing that efflux substrate specificity is not conferred by this component. Serves as the outer membrane component for the MexXY efflux system. Implicated in the secretion of the siderophore pyoverdine. OprM is probably involved in the efflux of the siderophore across the outer membrane. The protein is Outer membrane protein OprM (oprM) of Pseudomonas aeruginosa (strain ATCC 15692 / DSM 22644 / CIP 104116 / JCM 14847 / LMG 12228 / 1C / PRS 101 / PAO1).